We begin with the raw amino-acid sequence, 217 residues long: MKIVIADDHAVVRTGFSMILNFQEDMEVVATAADGGEAYQKVMEHKPDVLIMDLSMPPGESGLIATSKISESFPETKILILTMYDDEEYLFHVLRNGAKGYILKNAPDEQLLLAVRTVYKGETYVDMKLTTSLVNEFVNHKHSDDVSTNDPFKILSKRELEILPLIAKGYGNKDIAEKLFVSVKTVEAHKTHIMTKLDLKSKPELVEYALKKKLLDF.

The region spanning 2 to 119 (KIVIADDHAV…QLLLAVRTVY (118 aa)) is the Response regulatory domain. The residue at position 53 (Asp-53) is a 4-aspartylphosphate. The 66-residue stretch at 148-213 (TNDPFKILSK…ELVEYALKKK (66 aa)) folds into the HTH luxR-type domain. The H-T-H motif DNA-binding region spans 172-191 (NKDIAEKLFVSVKTVEAHKT).

Post-translationally, phosphorylated by NreB.

It localises to the cytoplasm. In terms of biological role, member of the two-component regulatory system NreB/NreC involved in the control of dissimilatory nitrate/nitrite reduction in response to oxygen. Phosphorylated NreC binds to a GC-rich palindromic sequence at the promoters of the nitrate (narGHJI) and nitrite (nir) reductase operons, as well as the putative nitrate transporter gene narT, and activates their expression. This chain is Oxygen regulatory protein NreC (nreC), found in Staphylococcus haemolyticus (strain JCSC1435).